We begin with the raw amino-acid sequence, 326 residues long: Protein ORF5 in retron Ec67 (326 aa).

The tract at residues 1–24 (MGKSKKNRAAATNQLKHKSQTSAE) is disordered. Over residues 10–24 (AATNQLKHKSQTSAE) the composition is skewed to polar residues.

Belongs to the phage portal family. PBSX subfamily.

In Escherichia coli, this protein is Protein ORF5 in retron Ec67.